Here is a 183-residue protein sequence, read N- to C-terminus: Transposon gamma-delta resolvase (183 aa).

Positions 2–137 (RLFGYARVST…EGRQEAMAKG (136 aa)) constitute a Resolvase/invertase-type recombinase catalytic domain. S10 (O-(5'-phospho-DNA)-serine intermediate) is an active-site residue. Residues 161-180 (ASHISKTMNIARSTVYKVIN) constitute a DNA-binding region (H-T-H motif).

Belongs to the site-specific recombinase resolvase family.

Functionally, this protein catalyzes the site-specific recombination of the transposon and also regulates its frequency of transposition. The chain is Transposon gamma-delta resolvase (tnpR) from Escherichia coli (strain K12).